The sequence spans 80 residues: Adipogenin (80 aa).

The chain crosses the membrane as a helical span at residues 14–34 (FSFLVFWFCLPVGLLLLLIIW).

Belongs to the adipogenin family.

It localises to the membrane. It is found in the nucleus. Functionally, plays a role in stimulating adipocyte differentiation and development. This chain is Adipogenin, found in Homo sapiens (Human).